The chain runs to 420 residues: UDP-N-acetylglucosamine 1-carboxyvinyltransferase (420 aa).

Phosphoenolpyruvate is bound at residue 22–23; it reads KN. Arg-91 contributes to the UDP-N-acetyl-alpha-D-glucosamine binding site. The active-site Proton donor is Cys-115. The residue at position 115 (Cys-115) is a 2-(S-cysteinyl)pyruvic acid O-phosphothioketal. UDP-N-acetyl-alpha-D-glucosamine contacts are provided by residues 120 to 124, 160 to 163, Asp-305, and Ile-327; these read RPVDL and KVSV.

It belongs to the EPSP synthase family. MurA subfamily.

It is found in the cytoplasm. It carries out the reaction phosphoenolpyruvate + UDP-N-acetyl-alpha-D-glucosamine = UDP-N-acetyl-3-O-(1-carboxyvinyl)-alpha-D-glucosamine + phosphate. It participates in cell wall biogenesis; peptidoglycan biosynthesis. In terms of biological role, cell wall formation. Adds enolpyruvyl to UDP-N-acetylglucosamine. The protein is UDP-N-acetylglucosamine 1-carboxyvinyltransferase of Pectobacterium atrosepticum (strain SCRI 1043 / ATCC BAA-672) (Erwinia carotovora subsp. atroseptica).